The chain runs to 157 residues: Crossover junction endodeoxyribonuclease RuvC (157 aa).

Residues aspartate 7, glutamate 66, and aspartate 139 contribute to the active site. Aspartate 7, glutamate 66, and aspartate 139 together coordinate Mg(2+).

This sequence belongs to the RuvC family. As to quaternary structure, homodimer which binds Holliday junction (HJ) DNA. The HJ becomes 2-fold symmetrical on binding to RuvC with unstacked arms; it has a different conformation from HJ DNA in complex with RuvA. In the full resolvosome a probable DNA-RuvA(4)-RuvB(12)-RuvC(2) complex forms which resolves the HJ. The cofactor is Mg(2+).

It localises to the cytoplasm. It carries out the reaction Endonucleolytic cleavage at a junction such as a reciprocal single-stranded crossover between two homologous DNA duplexes (Holliday junction).. Its function is as follows. The RuvA-RuvB-RuvC complex processes Holliday junction (HJ) DNA during genetic recombination and DNA repair. Endonuclease that resolves HJ intermediates. Cleaves cruciform DNA by making single-stranded nicks across the HJ at symmetrical positions within the homologous arms, yielding a 5'-phosphate and a 3'-hydroxyl group; requires a central core of homology in the junction. The consensus cleavage sequence is 5'-(A/T)TT(C/G)-3'. Cleavage occurs on the 3'-side of the TT dinucleotide at the point of strand exchange. HJ branch migration catalyzed by RuvA-RuvB allows RuvC to scan DNA until it finds its consensus sequence, where it cleaves and resolves the cruciform DNA. The sequence is that of Crossover junction endodeoxyribonuclease RuvC from Helicobacter pylori (strain ATCC 700392 / 26695) (Campylobacter pylori).